The chain runs to 497 residues: Protein FAM114A2 (497 aa).

The interval 1–54 (MSDKDPPESPVVTGVASTLKDENCEPVEKPEDKSQPVVSTRKRPETKPSSDLEA) is disordered. Residues 19 to 34 (LKDENCEPVEKPEDKS) are compositionally biased toward basic and acidic residues. A phosphoserine mark is found at serine 84 and serine 205. A disordered region spans residues 344-364 (VAEKEEGEKESEAGNTEEAQK).

The protein belongs to the FAM114 family.

This Mus musculus (Mouse) protein is Protein FAM114A2 (Fam114a2).